Here is a 235-residue protein sequence, read N- to C-terminus: Phosphatidylserine decarboxylase proenzyme (235 aa).

Ser-204 (schiff-base intermediate with substrate; via pyruvic acid) is an active-site residue. Pyruvic acid (Ser); by autocatalysis is present on Ser-204.

It belongs to the phosphatidylserine decarboxylase family. PSD-A subfamily. In terms of assembly, heterodimer of a large membrane-associated beta subunit and a small pyruvoyl-containing alpha subunit. Pyruvate is required as a cofactor. Post-translationally, is synthesized initially as an inactive proenzyme. Formation of the active enzyme involves a self-maturation process in which the active site pyruvoyl group is generated from an internal serine residue via an autocatalytic post-translational modification. Two non-identical subunits are generated from the proenzyme in this reaction, and the pyruvate is formed at the N-terminus of the alpha chain, which is derived from the carboxyl end of the proenzyme. The post-translation cleavage follows an unusual pathway, termed non-hydrolytic serinolysis, in which the side chain hydroxyl group of the serine supplies its oxygen atom to form the C-terminus of the beta chain, while the remainder of the serine residue undergoes an oxidative deamination to produce ammonia and the pyruvoyl prosthetic group on the alpha chain.

The protein localises to the cell membrane. The catalysed reaction is a 1,2-diacyl-sn-glycero-3-phospho-L-serine + H(+) = a 1,2-diacyl-sn-glycero-3-phosphoethanolamine + CO2. It functions in the pathway phospholipid metabolism; phosphatidylethanolamine biosynthesis; phosphatidylethanolamine from CDP-diacylglycerol: step 2/2. Functionally, catalyzes the formation of phosphatidylethanolamine (PtdEtn) from phosphatidylserine (PtdSer). In Mycobacterium sp. (strain JLS), this protein is Phosphatidylserine decarboxylase proenzyme.